The following is a 312-amino-acid chain: Src-like-adapter (312 aa).

The disordered stretch occupies residues 1-33 (MLCRLPGPSTSRGEKEMGNSMKSTPAPLERPLS). The 61-residue stretch at 38-98 (LESDFLAVLN…PGICVARVYH (61 aa)) folds into the SH3 domain. The region spanning 100–191 (WLFEGLGRDK…GLCCVLTTPC (92 aa)) is the SH2 domain. Positions 206-312 (CTSPGSPVTL…TQKTKALTAT (107 aa)) are SLA C-terminal. Residue Ser274 is modified to Phosphoserine.

Homodimer. Interacts with phosphorylated CBL, SYK and LAT. Homodimerization and interaction with phosphorylated CBL occurs via its C-terminal domain. Interacts with PDGFRB and EPHA2. Interacts with phosphorylated proteins ZAP70; CD3Z; VAV1 and LCP2 via its SH2 domain. Phosphorylated.

Its subcellular location is the cytoplasm. The protein resides in the endosome. Functionally, adapter protein, which negatively regulates T-cell receptor (TCR) signaling. Inhibits T-cell antigen-receptor induced activation of nuclear factor of activated T-cells. Involved in the negative regulation of positive selection and mitosis of T-cells. May act by linking signaling proteins such as ZAP70 with CBL, leading to a CBL dependent degradation of signaling proteins. The polypeptide is Src-like-adapter (Sla) (Rattus norvegicus (Rat)).